The chain runs to 296 residues: NAD kinase (296 aa).

Aspartate 72 (proton acceptor) is an active-site residue. Residues 72 to 73 (DG), 146 to 147 (ND), arginine 157, lysine 174, aspartate 176, 187 to 192 (TAYALS), and glutamine 247 contribute to the NAD(+) site.

Belongs to the NAD kinase family. Requires a divalent metal cation as cofactor.

It is found in the cytoplasm. It carries out the reaction NAD(+) + ATP = ADP + NADP(+) + H(+). In terms of biological role, involved in the regulation of the intracellular balance of NAD and NADP, and is a key enzyme in the biosynthesis of NADP. Catalyzes specifically the phosphorylation on 2'-hydroxyl of the adenosine moiety of NAD to yield NADP. This chain is NAD kinase, found in Pseudomonas putida (strain GB-1).